A 356-amino-acid polypeptide reads, in one-letter code: S-adenosylmethionine:tRNA ribosyltransferase-isomerase (356 aa).

The protein belongs to the QueA family. In terms of assembly, monomer.

It is found in the cytoplasm. The catalysed reaction is 7-aminomethyl-7-carbaguanosine(34) in tRNA + S-adenosyl-L-methionine = epoxyqueuosine(34) in tRNA + adenine + L-methionine + 2 H(+). Its pathway is tRNA modification; tRNA-queuosine biosynthesis. Functionally, transfers and isomerizes the ribose moiety from AdoMet to the 7-aminomethyl group of 7-deazaguanine (preQ1-tRNA) to give epoxyqueuosine (oQ-tRNA). The sequence is that of S-adenosylmethionine:tRNA ribosyltransferase-isomerase from Enterobacter sp. (strain 638).